The chain runs to 259 residues: MGNQQVVSITGAGSGIGLELVRSFKSAGYYVSALVRNEEQEALLCKEFKDALEIVVGDVRDHATNEKLIKQTIDRFGHLDCFIANAGIWDYMLSIEEPWEKISSSFDEIFDINVKSYFSGISAALPELKKTNGSVVMTASVSSHAVGGGGSCYIASKHAVLGMVKALAYELAPEVRVNAVSPGGTVTSLCGPASAGFDKMHMKDMPGIDDMIKGLTPLGFAAKPEDVVAPYLLLASRKQGKFITGTVISIDGGMALGRK.

8 to 32 lines the NAD(+) pocket; that stretch reads SITGAGSGIGLELVRSFKSAGYYVS. Residue S140 participates in substrate binding. The active-site Proton acceptor is Y153.

This sequence belongs to the short-chain dehydrogenases/reductases (SDR) family.

The enzyme catalyses (1R,2S)-1,2-dihydronaphthalene-1,2-diol + NAD(+) = naphthalene-1,2-diol + NADH + H(+). The catalysed reaction is cis-1,2-dihydroxy-1,2-dihydrodibenzothiophene + NAD(+) = 1,2-dihydroxydibenzothiophene + NADH + H(+). It participates in aromatic compound metabolism; naphthalene degradation. Functionally, catalyzes the oxidation of naphthalene dihydrodiol into 1,2-dihydroxynaphthalene. The protein is 1,2-dihydroxy-1,2-dihydronaphthalene dehydrogenase (doxE) of Pseudomonas sp. (strain C18).